We begin with the raw amino-acid sequence, 146 residues long: Hemoglobin subunit beta (146 aa).

N-acetylvaline is present on Val1. The Globin domain maps to 2–146 (HLTGEEKAAV…VATALAHKYH (145 aa)). A Phosphothreonine modification is found at Thr12. Residue Ser44 is modified to Phosphoserine. The residue at position 59 (Lys59) is an N6-acetyllysine. His63 is a heme b binding site. N6-acetyllysine is present on Lys82. His92 lines the heme b pocket. At Cys93 the chain carries S-nitrosocysteine. Lys144 carries the post-translational modification N6-acetyllysine.

The protein belongs to the globin family. In terms of assembly, heterotetramer of two alpha chains and two beta chains. In terms of tissue distribution, red blood cells.

Its function is as follows. Involved in oxygen transport from the lung to the various peripheral tissues. The chain is Hemoglobin subunit beta (HBB) from Macroderma gigas (Australian ghost bat).